A 720-amino-acid polypeptide reads, in one-letter code: 1,4-alpha-glucan branching enzyme GlgB (720 aa).

Residue aspartate 400 is the Nucleophile of the active site. Glutamate 453 serves as the catalytic Proton donor.

The protein belongs to the glycosyl hydrolase 13 family. GlgB subfamily. Monomer.

The catalysed reaction is Transfers a segment of a (1-&gt;4)-alpha-D-glucan chain to a primary hydroxy group in a similar glucan chain.. The protein operates within glycan biosynthesis; glycogen biosynthesis. In terms of biological role, catalyzes the formation of the alpha-1,6-glucosidic linkages in glycogen by scission of a 1,4-alpha-linked oligosaccharide from growing alpha-1,4-glucan chains and the subsequent attachment of the oligosaccharide to the alpha-1,6 position. This Chlamydia pneumoniae (Chlamydophila pneumoniae) protein is 1,4-alpha-glucan branching enzyme GlgB.